A 186-amino-acid chain; its full sequence is Transcription factor pgmR (186 aa).

The segment at residues 19 to 46 (CDECGAAKLKCDRGHPSCGRCISLGLKC) is a DNA-binding region (zn(2)-C6 fungal-type). The tract at residues 52–98 (RKAGKPRRDAQSATRPPPTPGDSGPPLDYNSFGPTSPPSSVGDGATL) is disordered.

It localises to the nucleus. Transcription factor that specifically regulates the expression of the pgm gene cluster that mediates the biosynthesis of cryptic naphthoquinones derived pigments responsible for the coloration of the fruiting bodies. The polypeptide is Transcription factor pgmR (Aspergillus terreus (strain NIH 2624 / FGSC A1156)).